A 444-amino-acid polypeptide reads, in one-letter code: uncharacterized protein (444 aa).

The 218-residue stretch at 164–381 (GAYGKSFLLE…EKALKKEGIR (218 aa)) folds into the Radical SAM core domain. 3 residues coordinate [4Fe-4S] cluster: Cys178, Cys182, and Cys185.

Requires [4Fe-4S] cluster as cofactor.

This is an uncharacterized protein from Methanocaldococcus jannaschii (strain ATCC 43067 / DSM 2661 / JAL-1 / JCM 10045 / NBRC 100440) (Methanococcus jannaschii).